We begin with the raw amino-acid sequence, 382 residues long: ATP phosphoribosyltransferase regulatory subunit (382 aa).

It belongs to the class-II aminoacyl-tRNA synthetase family. HisZ subfamily. As to quaternary structure, heteromultimer composed of HisG and HisZ subunits.

It is found in the cytoplasm. Its pathway is amino-acid biosynthesis; L-histidine biosynthesis; L-histidine from 5-phospho-alpha-D-ribose 1-diphosphate: step 1/9. Its function is as follows. Required for the first step of histidine biosynthesis. May allow the feedback regulation of ATP phosphoribosyltransferase activity by histidine. The chain is ATP phosphoribosyltransferase regulatory subunit from Lacticaseibacillus paracasei (strain ATCC 334 / BCRC 17002 / CCUG 31169 / CIP 107868 / KCTC 3260 / NRRL B-441) (Lactobacillus paracasei).